We begin with the raw amino-acid sequence, 156 residues long: ATP synthase subunit b (156 aa).

Residues 12–32 (VAFFIFVLFCMKFVWPPVIAA) traverse the membrane as a helical segment.

It belongs to the ATPase B chain family. As to quaternary structure, F-type ATPases have 2 components, F(1) - the catalytic core - and F(0) - the membrane proton channel. F(1) has five subunits: alpha(3), beta(3), gamma(1), delta(1), epsilon(1). F(0) has three main subunits: a(1), b(2) and c(10-14). The alpha and beta chains form an alternating ring which encloses part of the gamma chain. F(1) is attached to F(0) by a central stalk formed by the gamma and epsilon chains, while a peripheral stalk is formed by the delta and b chains.

The protein resides in the cell inner membrane. In terms of biological role, f(1)F(0) ATP synthase produces ATP from ADP in the presence of a proton or sodium gradient. F-type ATPases consist of two structural domains, F(1) containing the extramembraneous catalytic core and F(0) containing the membrane proton channel, linked together by a central stalk and a peripheral stalk. During catalysis, ATP synthesis in the catalytic domain of F(1) is coupled via a rotary mechanism of the central stalk subunits to proton translocation. Functionally, component of the F(0) channel, it forms part of the peripheral stalk, linking F(1) to F(0). The polypeptide is ATP synthase subunit b (Pseudomonas aeruginosa (strain UCBPP-PA14)).